The following is a 154-amino-acid chain: Protein X (154 aa).

The mitochondrial targeting sequence stretch occupies residues 68 to 117; the sequence is PCALRFTSARCMETTVNAHQILPKVLHKRTLGLPAMSTTDLEAYFKDCVF.

The protein belongs to the orthohepadnavirus protein X family. As to quaternary structure, may form homodimer. May interact with host CEBPA, CFLAR, CREB1, DDB1, E4F1, HBXIP, HSPD1/HSP60, NFKBIA, POLR2E and SMAD4. Interacts with host SMC5-SMC6 complex and induces its degradation. Interacts with host TRPC4AP; leading to prevent ubiquitination of TRPC4AP. Interacts with host PLSCR1; this interaction promotes ubiquitination and degradation of HBx and impairs HBx-mediated cell proliferation. A fraction may be phosphorylated in insect cells and HepG2 cells, a human hepatoblastoma cell line. Phosphorylated in vitro by host protein kinase C or mitogen-activated protein kinase. N-acetylated in insect cells.

It localises to the host cytoplasm. The protein localises to the host nucleus. It is found in the host mitochondrion. Its function is as follows. Multifunctional protein that plays a role in silencing host antiviral defenses and promoting viral transcription. Does not seem to be essential for HBV infection. May be directly involved in development of cirrhosis and liver cancer (hepatocellular carcinoma). Most of cytosolic activities involve modulation of cytosolic calcium. The effect on apoptosis is controversial depending on the cell types in which the studies have been conducted. May induce apoptosis by localizing in mitochondria and causing loss of mitochondrial membrane potential. May also modulate apoptosis by binding host CFLAR, a key regulator of the death-inducing signaling complex (DISC). Promotes viral transcription by using the host E3 ubiquitin ligase DDB1 to target the SMC5-SMC6 complex to proteasomal degradation. This host complex would otherwise bind to viral episomal DNA, and prevents its transcription. Moderately stimulates transcription of many different viral and cellular transcription elements. Promoters and enhancers stimulated by HBx contain DNA binding sites for NF-kappa-B, AP-1, AP-2, c-EBP, ATF/CREB, or the calcium-activated factor NF-AT. The protein is Protein X of Hepatitis B virus genotype A2 subtype adw2 (strain Rutter 1979) (HBV-A).